Consider the following 224-residue polypeptide: UPF0758 protein VP0184 (224 aa).

An MPN domain is found at 102 to 224 (ALTSPEQTKL…SVSFAERGWI (123 aa)). Residues histidine 173, histidine 175, and aspartate 186 each coordinate Zn(2+). The JAMM motif motif lies at 173–186 (HNHPSGVAEPSQAD).

The protein belongs to the UPF0758 family.

The polypeptide is UPF0758 protein VP0184 (Vibrio parahaemolyticus serotype O3:K6 (strain RIMD 2210633)).